The chain runs to 209 residues: Orotate phosphoribosyltransferase (209 aa).

5-phospho-alpha-D-ribose 1-diphosphate is bound by residues Arg96, Lys100, His102, and 122-130 (EDLISTGGS). Orotate is bound at residue Ser126.

It belongs to the purine/pyrimidine phosphoribosyltransferase family. PyrE subfamily. In terms of assembly, homodimer. Mg(2+) serves as cofactor.

The enzyme catalyses orotidine 5'-phosphate + diphosphate = orotate + 5-phospho-alpha-D-ribose 1-diphosphate. It functions in the pathway pyrimidine metabolism; UMP biosynthesis via de novo pathway; UMP from orotate: step 1/2. Its function is as follows. Catalyzes the transfer of a ribosyl phosphate group from 5-phosphoribose 1-diphosphate to orotate, leading to the formation of orotidine monophosphate (OMP). The protein is Orotate phosphoribosyltransferase of Streptococcus mutans serotype c (strain ATCC 700610 / UA159).